A 195-amino-acid chain; its full sequence is Probable GTP-binding protein EngB (195 aa).

The 172-residue stretch at 24–195 folds into the EngB-type G domain; the sequence is ELPEIALAGR…EAWDAILEKL (172 aa). Residues 32–39, 59–63, 77–80, 144–147, and 176–178 each bind GTP; these read GRSNVGKS, GKTQL, DVPG, TKAD, and FSS. Mg(2+) contacts are provided by S39 and T61.

The protein belongs to the TRAFAC class TrmE-Era-EngA-EngB-Septin-like GTPase superfamily. EngB GTPase family. Mg(2+) is required as a cofactor.

Necessary for normal cell division and for the maintenance of normal septation. This Streptococcus pneumoniae (strain JJA) protein is Probable GTP-binding protein EngB.